Reading from the N-terminus, the 482-residue chain is MADTQTPNLQNTAEGDANTSAENERSLTVRANHQSQNTRSWLRYPFLVAGIALFLGPFSFFWPREGPIDSKDYVERTKRVLKTTPLIDGHNDLPWQLRIELHNRIYDGRVDLSKKLLGHTDIQRMRQGMVGGQFWSVYVDCDTQQQHFEDPSWVVRDTLEQIDVTRRFVNEHPEHLQYCDTPACAREAFKSGRISSMIGIEGGHQVGGSIGAIRQMFNLGARYITLTHNCDNAFGTSASTVAAGGADQGLFKLGYDAVKEMNRLGMMVDLSHVSHQTMRDVLGVTRAPVIFSHSGAYAVEPHLRHAPDDVLRLVKQNGGIVMAVFVNRFLNMKNPDQATIHDVVDHILHIAEVCGWECVGIGSDFSGTPFVPVGLEDVSKFPDLIQLLMERGATDQQIRLLAGENILRVWGKIEQRAKELQAGGEKPIEAEYEGRNWHKGMKNSPWMLRRSRDEALVNGAADQPFMFNVDSEGKHNPVVKQV.

Positions 1-21 are enriched in polar residues; that stretch reads MADTQTPNLQNTAEGDANTSA. Positions 1-24 are disordered; the sequence is MADTQTPNLQNTAEGDANTSAENE. N18 carries N-linked (GlcNAc...) asparagine glycosylation. A helical membrane pass occupies residues 41–61; it reads WLRYPFLVAGIALFLGPFSFF. The Zn(2+) site is built by H90, D92, and E201. C141 and C230 are disulfide-bonded. H228 contacts substrate. Positions 272 and 293 each coordinate Zn(2+). Residues R304 and D364 each contribute to the substrate site.

The protein belongs to the metallo-dependent hydrolases superfamily. Peptidase M19 family. Requires Zn(2+) as cofactor.

The protein localises to the membrane. The catalysed reaction is an L-aminoacyl-L-amino acid + H2O = 2 an L-alpha-amino acid. Functionally, hydrolyzes a wide range of dipeptides. This chain is Putative dipeptidase NECHADRAFT_87110, found in Fusarium vanettenii (strain ATCC MYA-4622 / CBS 123669 / FGSC 9596 / NRRL 45880 / 77-13-4) (Fusarium solani subsp. pisi).